We begin with the raw amino-acid sequence, 130 residues long: MLKTLPPTLREKKRYVALEIIFEDELFQKDVIAIVRNALMNYSGVLGCSKANPWLIDYNHPYGILRISRDEVDNLRSSLSLSNEHRKKPINIHIIGISNSVKHIREKFLHVPHEPYYKVIQKLKKKGPKR.

It belongs to the eukaryotic/archaeal RNase P protein component 2 family. Consists of a catalytic RNA component and at least 4-5 protein subunits.

It localises to the cytoplasm. The catalysed reaction is Endonucleolytic cleavage of RNA, removing 5'-extranucleotides from tRNA precursor.. Functionally, part of ribonuclease P, a protein complex that generates mature tRNA molecules by cleaving their 5'-ends. The chain is Ribonuclease P protein component 2 from Methanococcus maripaludis (strain C7 / ATCC BAA-1331).